A 169-amino-acid chain; its full sequence is HTH-type transcriptional regulator PchR (169 aa).

Positions 10–153 (YDIYVRLLHL…VLKFLEQLTS (144 aa)) constitute an HTH marR-type domain. The H-T-H motif DNA-binding region spans 64 to 87 (NAGIARKMNLSKANVTKISTKLIK).

In terms of assembly, homodimer.

Represses the expression of the yvmC-cypX operon, which is involved in pulcherriminic acid biosynthesis. Also negatively regulates yvmA, yvnB and its own expression. Positively regulates yisI expression. Acts by binding specifically to a 14-bp palindromic motif, the YvmB box, which is present in the promoter region of the target genes. The sequence is that of HTH-type transcriptional regulator PchR from Bacillus subtilis (strain 168).